Here is a 160-residue protein sequence, read N- to C-terminus: Small ribosomal subunit protein uS19v (160 aa).

It belongs to the universal ribosomal protein uS19 family.

The protein localises to the cytoplasm. The chain is Small ribosomal subunit protein uS19v (RPS15F) from Arabidopsis thaliana (Mouse-ear cress).